The sequence spans 159 residues: 3-hydroxyacyl-[acyl-carrier-protein] dehydratase FabZ (159 aa).

Residue histidine 65 is part of the active site.

This sequence belongs to the thioester dehydratase family. FabZ subfamily.

It localises to the cytoplasm. It carries out the reaction a (3R)-hydroxyacyl-[ACP] = a (2E)-enoyl-[ACP] + H2O. Functionally, involved in unsaturated fatty acids biosynthesis. Catalyzes the dehydration of short chain beta-hydroxyacyl-ACPs and long chain saturated and unsaturated beta-hydroxyacyl-ACPs. The chain is 3-hydroxyacyl-[acyl-carrier-protein] dehydratase FabZ from Microcystis aeruginosa (strain NIES-843 / IAM M-2473).